Consider the following 185-residue polypeptide: Threonylcarbamoyl-AMP synthase (185 aa).

A YrdC-like domain is found at 5-185 (ADRIADAVAA…DLQSGETLRR (181 aa)).

This sequence belongs to the SUA5 family. TsaC subfamily.

Its subcellular location is the cytoplasm. The enzyme catalyses L-threonine + hydrogencarbonate + ATP = L-threonylcarbamoyladenylate + diphosphate + H2O. Required for the formation of a threonylcarbamoyl group on adenosine at position 37 (t(6)A37) in tRNAs that read codons beginning with adenine. Catalyzes the conversion of L-threonine, HCO(3)(-)/CO(2) and ATP to give threonylcarbamoyl-AMP (TC-AMP) as the acyladenylate intermediate, with the release of diphosphate. This is Threonylcarbamoyl-AMP synthase from Chromohalobacter salexigens (strain ATCC BAA-138 / DSM 3043 / CIP 106854 / NCIMB 13768 / 1H11).